The following is a 372-amino-acid chain: GDSL esterase/lipase At5g45910 (372 aa).

The first 19 residues, 1–19 (MRINMLFIVAFSFLVSVRS), serve as a signal peptide directing secretion. S37 functions as the Nucleophile in the catalytic mechanism. Residues N66, N101, and N137 are each glycosylated (N-linked (GlcNAc...) asparagine). Catalysis depends on residues D345 and H348.

This sequence belongs to the 'GDSL' lipolytic enzyme family.

It localises to the secreted. This Arabidopsis thaliana (Mouse-ear cress) protein is GDSL esterase/lipase At5g45910.